Here is a 303-residue protein sequence, read N- to C-terminus: N-acetyl-D-glucosamine kinase (303 aa).

ATP-binding positions include 4 to 11 (GFDIGGTK) and 133 to 140 (GVGGGLVL). Zn(2+)-binding residues include His157, Cys177, Cys179, and Cys184.

Belongs to the ROK (NagC/XylR) family. NagK subfamily.

It catalyses the reaction N-acetyl-D-glucosamine + ATP = N-acetyl-D-glucosamine 6-phosphate + ADP + H(+). The protein operates within cell wall biogenesis; peptidoglycan recycling. Its function is as follows. Catalyzes the phosphorylation of N-acetyl-D-glucosamine (GlcNAc) derived from cell-wall degradation, yielding GlcNAc-6-P. The protein is N-acetyl-D-glucosamine kinase of Salmonella paratyphi B (strain ATCC BAA-1250 / SPB7).